We begin with the raw amino-acid sequence, 152 residues long: Large ribosomal subunit protein bL9 (152 aa).

The protein belongs to the bacterial ribosomal protein bL9 family.

In terms of biological role, binds to the 23S rRNA. This Prochlorococcus marinus (strain MIT 9313) protein is Large ribosomal subunit protein bL9.